Reading from the N-terminus, the 55-residue chain is A-type ATP synthase subunit G (55 aa).

Has multiple subunits, A(3), B(3), C, D, E, F, G, I and K(x); there may be a few other subunits as well.

It is found in the cell membrane. Component of the A-type ATP synthase that produces ATP from ADP in the presence of a proton gradient across the membrane. In Methanosarcina mazei (strain ATCC BAA-159 / DSM 3647 / Goe1 / Go1 / JCM 11833 / OCM 88) (Methanosarcina frisia), this protein is A-type ATP synthase subunit G (atpG).